Consider the following 684-residue polypeptide: DNA ligase (684 aa).

NAD(+) is bound by residues Asp-34–Asp-38, Ser-83–Leu-84, and Glu-117. The active-site N6-AMP-lysine intermediate is Lys-119. NAD(+) contacts are provided by Arg-140, Glu-188, Lys-301, and Lys-325. 4 residues coordinate Zn(2+): Cys-419, Cys-422, Cys-437, and Cys-443. Positions Asp-602–Asp-684 constitute a BRCT domain.

Belongs to the NAD-dependent DNA ligase family. LigA subfamily. It depends on Mg(2+) as a cofactor. Requires Mn(2+) as cofactor.

The enzyme catalyses NAD(+) + (deoxyribonucleotide)n-3'-hydroxyl + 5'-phospho-(deoxyribonucleotide)m = (deoxyribonucleotide)n+m + AMP + beta-nicotinamide D-nucleotide.. In terms of biological role, DNA ligase that catalyzes the formation of phosphodiester linkages between 5'-phosphoryl and 3'-hydroxyl groups in double-stranded DNA using NAD as a coenzyme and as the energy source for the reaction. It is essential for DNA replication and repair of damaged DNA. This is DNA ligase from Chloroherpeton thalassium (strain ATCC 35110 / GB-78).